We begin with the raw amino-acid sequence, 498 residues long: Diacylglycerol O-acyltransferase 1 (498 aa).

Residues M1–T66 are disordered. Residues M1 to S92 are Cytoplasmic-facing. Residues M1–G96 form an involved in homomerization region. A Phosphoserine modification is found at S20. The span at H58–V68 shows a compositional bias: basic and acidic residues. A helical membrane pass occupies residues N93–I127. Residues Q128–S139 are Lumenal-facing. Residues Q128–S139 form an extracellular loop 1 (EL1) region. The chain crosses the membrane as a helical span at residues W140–V165. Positions W140–A498 are MBOAT fold. The Cytoplasmic portion of the chain corresponds to G166 to E170. The helical transmembrane segment at Q171 to L193 threads the bilayer. Residues L194–P200 are Lumenal-facing. The chain crosses the membrane as a helical span at residues V201–V232. The Cytoplasmic segment spans residues K233–I284. The interval K235–R287 is intracellular loop 1 (IL1). Residues R285 to M319 form a helical membrane-spanning segment. Topologically, residues K320–D326 are lumenal. Residues Y327–L364 form a helical membrane-spanning segment. At Q365 to N410 the chain is on the cytoplasmic side. The intracellular loop 2 (IL2) stretch occupies residues Q365–N410. The FYXDWWN motif motif lies at F371–N377. An acyl-CoA contacts are provided by residues W385 to H393, Y401, and R415. The tract at residues P391 to L405 is amphipathic helix (AH). Residues K411 to S431 form a helical membrane-spanning segment. H426 is an active-site residue. Topologically, residues I432 to L439 are lumenal. A helical membrane pass occupies residues W440–F458. Residues F459–Q460 lie on the Cytoplasmic side of the membrane. Residues G461–Y492 form a helical membrane-spanning segment. Y488 serves as a coordination point for an acyl-CoA. The Lumenal portion of the chain corresponds to D493–A498.

It belongs to the membrane-bound acyltransferase family. Sterol o-acyltransferase subfamily. Homodimer or homotetramer; both forms have similar enzymatic activities.

The protein resides in the endoplasmic reticulum membrane. The catalysed reaction is an acyl-CoA + a 1,2-diacyl-sn-glycerol = a triacyl-sn-glycerol + CoA. The enzyme catalyses all-trans-retinol + an acyl-CoA = an all-trans-retinyl ester + CoA. It carries out the reaction 2-(9Z-octadecenoyl)-glycerol + (9Z)-octadecenoyl-CoA = 1,2-di-(9Z-octadecenoyl)-sn-glycerol + CoA. It catalyses the reaction 1,2-di-(9Z-octadecenoyl)-sn-glycerol + (9Z)-octadecenoyl-CoA = 1,2,3-tri-(9Z-octadecenoyl)-glycerol + CoA. The catalysed reaction is all-trans-retinol + hexadecanoyl-CoA = all-trans-retinyl hexadecanoate + CoA. The enzyme catalyses 1-O-(9Z-octadecenyl)-glycerol + (9Z)-octadecenoyl-CoA = 1-O-(9Z-octadecyl)-3-(9Z-octadecenoyl)-glycerol + CoA. It carries out the reaction 1-O-(9Z-octadecyl)-3-(9Z-octadecenoyl)-glycerol + (9Z)-octadecenoyl-CoA = 1-O-(9Z-octadecenyl)-2,3-di-(9Z-octadecenoyl)glycerol + CoA. It catalyses the reaction 1-(9Z-octadecenoyl)-glycerol + (9Z)-octadecenoyl-CoA = 1,2-di-(9Z-octadecenoyl)-glycerol + CoA. The catalysed reaction is 1,2-di-(9Z-octadecenoyl)-glycerol + (9Z)-octadecenoate + H(+) = 1,2,3-tri-(9Z-octadecenoyl)-glycerol + H2O. The enzyme catalyses 1-octadecanoyl-2-(5Z,8Z,11Z,14Z-eicosatetraenoyl)-sn-glycerol + (9Z)-octadecenoyl-CoA = 1-octadecanoyl-2-(5Z,8Z,11Z,14Z)-eicosatetraenoyl-3-(9Z)-octadecenoyl-sn-glycerol + CoA. It carries out the reaction hexadecane-1,2-diol + 2 hexadecanoyl-CoA = 1,2-O,O-dihexadecanoyl-1,2-hexadecanediol + 2 CoA. It catalyses the reaction hexadecane-1,2-diol + hexadecanoyl-CoA = 2-hydroxyhexadecyl hexadecanoate + CoA. The catalysed reaction is 2-(9Z-octadecenoyl)-glycerol + hexadecanoyl-CoA = 1-hexadecanoyl-2-(9Z-octadecenoyl)-sn-glycerol + CoA. The enzyme catalyses 1,2-di-(9Z-octadecenoyl)-sn-glycerol + hexadecanoyl-CoA = 1,2-di-(9Z)-octadecenoyl-3-hexadecanoyl-sn-glycerol + CoA. It carries out the reaction hexadecan-1-ol + hexadecanoyl-CoA = hexadecanyl hexadecanoate + CoA. It catalyses the reaction 13-cis-retinol + hexadecanoyl-CoA = 13-cis-retinyl hexadecanoate + CoA. The catalysed reaction is 1,3-di-(9Z-octadecenoyl)-glycerol + (9Z)-octadecenoyl-CoA = 1,2,3-tri-(9Z-octadecenoyl)-glycerol + CoA. The enzyme catalyses 2,3-di-(9Z)-octadecenoyl-sn-glycerol + (9Z)-octadecenoyl-CoA = 1,2,3-tri-(9Z-octadecenoyl)-glycerol + CoA. It functions in the pathway lipid metabolism; glycerolipid metabolism. Functionally, catalyzes the terminal and only committed step in triacylglycerol synthesis by using diacylglycerol and fatty acyl CoA as substrates. Highly expressed in epithelial cells of the small intestine and its activity is essential for the absorption of dietary fats. In liver, plays a role in esterifying exogenous fatty acids to glycerol, and is required to synthesize fat for storage. Also present in female mammary glands, where it produces fat in the milk. May be involved in VLDL (very low density lipoprotein) assembly. In contrast to DGAT2 it is not essential for survival. Functions as the major acyl-CoA retinol acyltransferase (ARAT) in the skin, where it acts to maintain retinoid homeostasis and prevent retinoid toxicity leading to skin and hair disorders. Exhibits additional acyltransferase activities, includin acyl CoA:monoacylglycerol acyltransferase (MGAT), wax monoester and wax diester synthases. Also able to use 1-monoalkylglycerol (1-MAkG) as an acyl acceptor for the synthesis of monoalkyl-monoacylglycerol (MAMAG). The polypeptide is Diacylglycerol O-acyltransferase 1 (Rattus norvegicus (Rat)).